We begin with the raw amino-acid sequence, 314 residues long: Lipoyl synthase (314 aa).

C40, C45, C51, C67, C71, C74, and S280 together coordinate [4Fe-4S] cluster. A Radical SAM core domain is found at 53–269; sequence SERKTATFMI…KNIALEKGFS (217 aa).

Belongs to the radical SAM superfamily. Lipoyl synthase family. [4Fe-4S] cluster is required as a cofactor.

Its subcellular location is the cytoplasm. The enzyme catalyses [[Fe-S] cluster scaffold protein carrying a second [4Fe-4S](2+) cluster] + N(6)-octanoyl-L-lysyl-[protein] + 2 oxidized [2Fe-2S]-[ferredoxin] + 2 S-adenosyl-L-methionine + 4 H(+) = [[Fe-S] cluster scaffold protein] + N(6)-[(R)-dihydrolipoyl]-L-lysyl-[protein] + 4 Fe(3+) + 2 hydrogen sulfide + 2 5'-deoxyadenosine + 2 L-methionine + 2 reduced [2Fe-2S]-[ferredoxin]. It functions in the pathway protein modification; protein lipoylation via endogenous pathway; protein N(6)-(lipoyl)lysine from octanoyl-[acyl-carrier-protein]. Functionally, catalyzes the radical-mediated insertion of two sulfur atoms into the C-6 and C-8 positions of the octanoyl moiety bound to the lipoyl domains of lipoate-dependent enzymes, thereby converting the octanoylated domains into lipoylated derivatives. This Oceanobacillus iheyensis (strain DSM 14371 / CIP 107618 / JCM 11309 / KCTC 3954 / HTE831) protein is Lipoyl synthase.